We begin with the raw amino-acid sequence, 547 residues long: Apolipoprotein N-acyltransferase (547 aa).

6 helical membrane passes run 31-51 (PLPA…AAHA), 65-85 (GWLF…VSMH), 89-109 (GLAA…LALF), 144-164 (AACW…FPWL), 181-201 (LLGV…LAGL), and 215-235 (LAAG…QFSW). Positions 248–511 (VQGNVEQSQK…AGVLPVAVQG (264 aa)) constitute a CN hydrolase domain. Glu292 acts as the Proton acceptor in catalysis. Residue Lys366 is part of the active site. Cys416 acts as the Nucleophile in catalysis.

Belongs to the CN hydrolase family. Apolipoprotein N-acyltransferase subfamily.

It localises to the cell inner membrane. It carries out the reaction N-terminal S-1,2-diacyl-sn-glyceryl-L-cysteinyl-[lipoprotein] + a glycerophospholipid = N-acyl-S-1,2-diacyl-sn-glyceryl-L-cysteinyl-[lipoprotein] + a 2-acyl-sn-glycero-3-phospholipid + H(+). It participates in protein modification; lipoprotein biosynthesis (N-acyl transfer). In terms of biological role, catalyzes the phospholipid dependent N-acylation of the N-terminal cysteine of apolipoprotein, the last step in lipoprotein maturation. This is Apolipoprotein N-acyltransferase from Bordetella bronchiseptica (strain ATCC BAA-588 / NCTC 13252 / RB50) (Alcaligenes bronchisepticus).